A 487-amino-acid polypeptide reads, in one-letter code: Betaine aldehyde dehydrogenase (487 aa).

Positions 26 and 93 each coordinate K(+). 150-152 (GAW) lines the NAD(+) pocket. K162 (charge relay system) is an active-site residue. Residues 176–179 (KPSE) and 229–232 (SVPT) contribute to the NAD(+) site. L244 provides a ligand contact to K(+). E250 serves as the catalytic Proton acceptor. NAD(+) is bound by residues G252, C284, and E384. The active-site Nucleophile is the C284. C284 bears the Cysteine sulfenic acid (-SOH) mark. Residues K454 and G457 each coordinate K(+). E461 (charge relay system) is an active-site residue.

It belongs to the aldehyde dehydrogenase family. In terms of assembly, dimer of dimers. It depends on K(+) as a cofactor.

It carries out the reaction betaine aldehyde + NAD(+) + H2O = glycine betaine + NADH + 2 H(+). Its pathway is amine and polyamine biosynthesis; betaine biosynthesis via choline pathway; betaine from betaine aldehyde: step 1/1. Its function is as follows. Involved in the biosynthesis of the osmoprotectant glycine betaine. Catalyzes the irreversible oxidation of betaine aldehyde to the corresponding acid. The protein is Betaine aldehyde dehydrogenase of Rhizobium leguminosarum bv. trifolii (strain WSM2304).